A 152-amino-acid polypeptide reads, in one-letter code: tRNA-specific adenosine deaminase (152 aa).

In terms of domain architecture, CMP/dCMP-type deaminase spans 2 to 111; sequence AERTHFMELA…AQDPKGGAVE (110 aa). Residue H53 participates in Zn(2+) binding. E55 acts as the Proton donor in catalysis. Residues C83 and C86 each coordinate Zn(2+).

The protein belongs to the cytidine and deoxycytidylate deaminase family. As to quaternary structure, homodimer. Zn(2+) serves as cofactor.

The enzyme catalyses adenosine(34) in tRNA + H2O + H(+) = inosine(34) in tRNA + NH4(+). Its function is as follows. Catalyzes the deamination of adenosine to inosine at the wobble position 34 of tRNA(Arg2). The chain is tRNA-specific adenosine deaminase from Agrobacterium fabrum (strain C58 / ATCC 33970) (Agrobacterium tumefaciens (strain C58)).